Consider the following 1095-residue polypeptide: Putative patatin-like phospholipase domain-containing protein M110.7 (1095 aa).

Residues 9–29 (LLLIFENILELCMCITLVILI) traverse the membrane as a helical segment. The disordered stretch occupies residues 75–113 (HKKRSSKEEMTPDKKRDSSEKISKQPPRELFEPNEQEQV). Basic and acidic residues predominate over residues 80 to 105 (SKEEMTPDKKRDSSEKISKQPPRELF). Residues 144–237 (VETL…LTSF), 327–416 (RKYE…IQFL), and 450–509 (IETG…TVMA) each bind a nucleoside 3',5'-cyclic phosphate. The 168-residue stretch at 768-935 (IVFGGGGARG…VNNLPADIMR (168 aa)) folds into the PNPLA domain. The GXGXXG motif lies at 772–777 (GGGARG). The GXSXG signature appears at 799 to 803 (GTSIG). Residue serine 801 is the Nucleophile of the active site. Aspartate 922 serves as the catalytic Proton acceptor. A DGA/G motif is present at residues 922-924 (DGA).

The protein belongs to the NTE family.

The protein localises to the membrane. The sequence is that of Putative patatin-like phospholipase domain-containing protein M110.7 from Caenorhabditis elegans.